A 492-amino-acid chain; its full sequence is Nuclear hormone receptor family member nhr-4 (492 aa).

Positions 47-122 form a DNA-binding region, nuclear receptor; sequence RLICDVCGDV…VGMNPDSVQN (76 aa). 2 NR C4-type zinc fingers span residues 50-70 and 86-110; these read CDVC…CNGC and CRFG…LKKC. A disordered region spans residues 121–143; that stretch reads QNERDRNAKNGGMGGPMSSPTQS. An NR LBD domain is found at 215–481; sequence MDFSIHSAVL…ELIQATHKTT (267 aa).

Belongs to the nuclear hormone receptor family.

Its subcellular location is the nucleus. In terms of biological role, orphan nuclear receptor. This Caenorhabditis elegans protein is Nuclear hormone receptor family member nhr-4 (nhr-4).